We begin with the raw amino-acid sequence, 484 residues long: Cysteine--tRNA ligase (484 aa).

Zn(2+) is bound at residue Cys29. A 'HIGH' region motif is present at residues 31 to 41 (PTVQSAPHIGH). The Zn(2+) site is built by Cys219, His244, and Glu248. A 'KMSKS' region motif is present at residues 275-279 (KMSKS). Residue Lys278 participates in ATP binding.

This sequence belongs to the class-I aminoacyl-tRNA synthetase family. Monomer. The cofactor is Zn(2+).

The protein resides in the cytoplasm. It carries out the reaction tRNA(Cys) + L-cysteine + ATP = L-cysteinyl-tRNA(Cys) + AMP + diphosphate. The polypeptide is Cysteine--tRNA ligase (Clavibacter michiganensis subsp. michiganensis (strain NCPPB 382)).